A 198-amino-acid polypeptide reads, in one-letter code: Ribonuclease HII 1 (198 aa).

The 190-residue stretch at 7 to 196 folds into the RNase H type-2 domain; sequence ELTAGVDEAG…VRAALARAAA (190 aa). Residues D13, E14, and D105 each contribute to the a divalent metal cation site.

The protein belongs to the RNase HII family. Requires Mn(2+) as cofactor. The cofactor is Mg(2+).

The protein resides in the cytoplasm. The enzyme catalyses Endonucleolytic cleavage to 5'-phosphomonoester.. Endonuclease that specifically degrades the RNA of RNA-DNA hybrids. The sequence is that of Ribonuclease HII 1 from Methylibium petroleiphilum (strain ATCC BAA-1232 / LMG 22953 / PM1).